The chain runs to 380 residues: Cytochrome b (380 aa).

4 consecutive transmembrane segments (helical) span residues 34–54 (FGSLLGICLATQILTGLLLAM), 78–99 (WLIRNLHANGASLFFICIYMHI), 114–134 (WNTGIILLLTLMATAFVGYVL), and 179–199 (FFALHFLLPFLIAGLTLIHLT). Heme b is bound by residues H84 and H98. H183 and H197 together coordinate heme b. A ubiquinone is bound at residue H202. Transmembrane regions (helical) follow at residues 227-247 (LKDILGFMLMYLPLMTLALFT), 289-309 (LGGVLALAASVLILFLSPLLH), 321-341 (LSQSLFWLLVTNLLILTWVGS), and 348-368 (FIIIGQLASLSYFTTLLILLP).

This sequence belongs to the cytochrome b family. The cytochrome bc1 complex contains 11 subunits: 3 respiratory subunits (MT-CYB, CYC1 and UQCRFS1), 2 core proteins (UQCRC1 and UQCRC2) and 6 low-molecular weight proteins (UQCRH/QCR6, UQCRB/QCR7, UQCRQ/QCR8, UQCR10/QCR9, UQCR11/QCR10 and a cleavage product of UQCRFS1). This cytochrome bc1 complex then forms a dimer. The cofactor is heme b.

Its subcellular location is the mitochondrion inner membrane. In terms of biological role, component of the ubiquinol-cytochrome c reductase complex (complex III or cytochrome b-c1 complex) that is part of the mitochondrial respiratory chain. The b-c1 complex mediates electron transfer from ubiquinol to cytochrome c. Contributes to the generation of a proton gradient across the mitochondrial membrane that is then used for ATP synthesis. The sequence is that of Cytochrome b (MT-CYB) from Falco peregrinus (Peregrine falcon).